Consider the following 283-residue polypeptide: N-terminal Xaa-Pro-Lys N-methyltransferase 2 (283 aa).

Residues G124, R129, D146, 174–175 (LQ), Q190, and H195 contribute to the S-adenosyl-L-methionine site.

The protein belongs to the methyltransferase superfamily. NTM1 family.

It localises to the nucleus. It carries out the reaction N-terminal L-alanyl-L-prolyl-L-lysyl-[protein] + S-adenosyl-L-methionine = N-terminal N-methyl-L-alanyl-L-prolyl-L-lysyl-[protein] + S-adenosyl-L-homocysteine + H(+). The enzyme catalyses N-terminal L-prolyl-L-prolyl-L-lysyl-[protein] + S-adenosyl-L-methionine = N-terminal N-methyl-L-prolyl-L-prolyl-L-lysyl-[protein] + S-adenosyl-L-homocysteine + H(+). The catalysed reaction is N-terminal L-seryl-L-prolyl-L-lysyl-[protein] + S-adenosyl-L-methionine = N-terminal N-methyl-L-seryl-L-prolyl-L-lysyl-[protein] + S-adenosyl-L-homocysteine + H(+). Functionally, alpha N-methyltransferase that methylates the N-terminus of target proteins containing the N-terminal motif [Ala/Pro/Ser]-Pro-Lys when the initiator Met is cleaved. Specifically catalyzes monomethylation of exposed alpha-amino group of Ala or Ser residue in the [Ala/Ser]-Pro-Lys motif and Pro in the Pro-Pro-Lys motif. Predominantly functions as a mono-methyltransferase but is also able to di-/tri-methylate the GPKRIA peptide and di-methylate the PPKRIA peptide (in vitro). May activate NTMT1 by priming its substrates for trimethylation. This chain is N-terminal Xaa-Pro-Lys N-methyltransferase 2, found in Homo sapiens (Human).